Here is a 1179-residue protein sequence, read N- to C-terminus: ATP-dependent helicase/deoxyribonuclease subunit B (1179 aa).

Belongs to the helicase family. AddB/RexB type 2 subfamily. As to quaternary structure, heterodimer of AddA and RexB. The cofactor is Mg(2+).

The heterodimer acts as both an ATP-dependent DNA helicase and an ATP-dependent, dual-direction single-stranded exonuclease. Recognizes the chi site generating a DNA molecule suitable for the initiation of homologous recombination. This subunit has 5' -&gt; 3' nuclease activity but not helicase activity. The chain is ATP-dependent helicase/deoxyribonuclease subunit B from Lacticaseibacillus casei (strain BL23) (Lactobacillus casei).